The primary structure comprises 614 residues: Dihydroxy-acid dehydratase 1 (614 aa).

Residue Asp-81 participates in Mg(2+) binding. Cys-122 provides a ligand contact to [2Fe-2S] cluster. Residues Asp-123 and Lys-124 each contribute to the Mg(2+) site. The residue at position 124 (Lys-124) is an N6-carboxylysine. A [2Fe-2S] cluster-binding site is contributed by Cys-195. Residue Glu-491 coordinates Mg(2+). Residue Ser-517 is the Proton acceptor of the active site.

The protein belongs to the IlvD/Edd family. In terms of assembly, homodimer. It depends on [2Fe-2S] cluster as a cofactor. Mg(2+) is required as a cofactor.

It catalyses the reaction (2R)-2,3-dihydroxy-3-methylbutanoate = 3-methyl-2-oxobutanoate + H2O. It carries out the reaction (2R,3R)-2,3-dihydroxy-3-methylpentanoate = (S)-3-methyl-2-oxopentanoate + H2O. The protein operates within amino-acid biosynthesis; L-isoleucine biosynthesis; L-isoleucine from 2-oxobutanoate: step 3/4. Its pathway is amino-acid biosynthesis; L-valine biosynthesis; L-valine from pyruvate: step 3/4. Functionally, functions in the biosynthesis of branched-chain amino acids. Catalyzes the dehydration of (2R,3R)-2,3-dihydroxy-3-methylpentanoate (2,3-dihydroxy-3-methylvalerate) into 2-oxo-3-methylpentanoate (2-oxo-3-methylvalerate) and of (2R)-2,3-dihydroxy-3-methylbutanoate (2,3-dihydroxyisovalerate) into 2-oxo-3-methylbutanoate (2-oxoisovalerate), the penultimate precursor to L-isoleucine and L-valine, respectively. In Mesorhizobium japonicum (strain LMG 29417 / CECT 9101 / MAFF 303099) (Mesorhizobium loti (strain MAFF 303099)), this protein is Dihydroxy-acid dehydratase 1.